The following is a 463-amino-acid chain: ATP synthase subunit beta (463 aa).

Residue 152 to 159 (GGAGVGKT) coordinates ATP.

Belongs to the ATPase alpha/beta chains family. As to quaternary structure, F-type ATPases have 2 components, CF(1) - the catalytic core - and CF(0) - the membrane proton channel. CF(1) has five subunits: alpha(3), beta(3), gamma(1), delta(1), epsilon(1). CF(0) has three main subunits: a(1), b(2) and c(9-12). The alpha and beta chains form an alternating ring which encloses part of the gamma chain. CF(1) is attached to CF(0) by a central stalk formed by the gamma and epsilon chains, while a peripheral stalk is formed by the delta and b chains.

The protein localises to the cell inner membrane. It catalyses the reaction ATP + H2O + 4 H(+)(in) = ADP + phosphate + 5 H(+)(out). In terms of biological role, produces ATP from ADP in the presence of a proton gradient across the membrane. The catalytic sites are hosted primarily by the beta subunits. The protein is ATP synthase subunit beta of Shewanella oneidensis (strain ATCC 700550 / JCM 31522 / CIP 106686 / LMG 19005 / NCIMB 14063 / MR-1).